We begin with the raw amino-acid sequence, 89 residues long: Small ribosomal subunit protein uS15 (89 aa).

Residues 1-18 (MALSAQEKDAIVKEHQTS) are compositionally biased toward basic and acidic residues. A disordered region spans residues 1–25 (MALSAQEKDAIVKEHQTSETDTGSP).

This sequence belongs to the universal ribosomal protein uS15 family. As to quaternary structure, part of the 30S ribosomal subunit. Forms a bridge to the 50S subunit in the 70S ribosome, contacting the 23S rRNA.

Its function is as follows. One of the primary rRNA binding proteins, it binds directly to 16S rRNA where it helps nucleate assembly of the platform of the 30S subunit by binding and bridging several RNA helices of the 16S rRNA. In terms of biological role, forms an intersubunit bridge (bridge B4) with the 23S rRNA of the 50S subunit in the ribosome. The polypeptide is Small ribosomal subunit protein uS15 (Teredinibacter turnerae (strain ATCC 39867 / T7901)).